Reading from the N-terminus, the 350-residue chain is Protein RecA (350 aa).

67-74 is an ATP binding site; it reads GPESSGKT.

This sequence belongs to the RecA family.

The protein localises to the cytoplasm. In terms of biological role, can catalyze the hydrolysis of ATP in the presence of single-stranded DNA, the ATP-dependent uptake of single-stranded DNA by duplex DNA, and the ATP-dependent hybridization of homologous single-stranded DNAs. It interacts with LexA causing its activation and leading to its autocatalytic cleavage. The protein is Protein RecA of Chlamydia felis (strain Fe/C-56) (Chlamydophila felis).